Here is a 185-residue protein sequence, read N- to C-terminus: ATP-dependent protease subunit HslV (185 aa).

Thr-12 is an active-site residue. Na(+) contacts are provided by Ala-168, Cys-171, and Thr-174.

It belongs to the peptidase T1B family. HslV subfamily. As to quaternary structure, a double ring-shaped homohexamer of HslV is capped on each side by a ring-shaped HslU homohexamer. The assembly of the HslU/HslV complex is dependent on binding of ATP.

Its subcellular location is the cytoplasm. It carries out the reaction ATP-dependent cleavage of peptide bonds with broad specificity.. Allosterically activated by HslU binding. Its function is as follows. Protease subunit of a proteasome-like degradation complex believed to be a general protein degrading machinery. This is ATP-dependent protease subunit HslV from Ruegeria pomeroyi (strain ATCC 700808 / DSM 15171 / DSS-3) (Silicibacter pomeroyi).